Consider the following 159-residue polypeptide: Succinate dehydrogenase [ubiquinone] cytochrome b small subunit, mitochondrial (159 aa).

The N-terminal 56 residues, 1–56, are a transit peptide targeting the mitochondrion; the sequence is MAVLLKLGVLCSGQGARALSLRSRAVRPAFVSAFLQDQPTPGWRGTQHIHLSPSHQ. Over 57–63 the chain is Mitochondrial matrix; that stretch reads SGSKAAS. Residues 64–85 form a helical membrane-spanning segment; it reads LHWTSERVVSVLLLGLIPAGYL. Residues 86-90 lie on the Mitochondrial intermembrane side of the membrane; it reads NPCSV. A helical transmembrane segment spans residues 91 to 111; the sequence is VDYSLAAALTLHSHWGIGQVV. Residue histidine 102 participates in heme b binding. Residues 112 to 120 lie on the Mitochondrial matrix side of the membrane; it reads TDYVHGDAL. An a ubiquinone-binding site is contributed by tyrosine 114. Residues 121–142 traverse the membrane as a helical segment; that stretch reads QKATKAGLLAVSALTFAGLCYF. The Mitochondrial intermembrane segment spans residues 143–159; the sequence is NYHDVGICRAVAMLWKL.

It belongs to the CybS family. As to quaternary structure, component of complex II composed of four subunits: the flavoprotein (FP) SDHA, iron-sulfur protein (IP) SDHB, and a cytochrome b560 composed of SDHC and SDHD.

It localises to the mitochondrion inner membrane. The protein operates within carbohydrate metabolism; tricarboxylic acid cycle. In terms of biological role, membrane-anchoring subunit of succinate dehydrogenase (SDH) that is involved in complex II of the mitochondrial electron transport chain and is responsible for transferring electrons from succinate to ubiquinone (coenzyme Q). SDH also oxidizes malate to the non-canonical enol form of oxaloacetate, enol-oxaloacetate. Enol-oxaloacetate, which is a potent inhibitor of the succinate dehydrogenase activity, is further isomerized into keto-oxaloacetate. The chain is Succinate dehydrogenase [ubiquinone] cytochrome b small subunit, mitochondrial (Sdhd) from Rattus norvegicus (Rat).